The following is a 155-amino-acid chain: MKPGAFALNPHAASYVPISKRVDYGGGDDGLVFAAKSPTVEVSMPKKSSEMAYKQIRDDDLDLEMDIDMDIEYLLVTFSGLSQESITDVYLANGGDLEATIEMLNQLEIYSTESEENLPETLDIGDISESGPSTSKSTEVAASTSSVIPNAPVSA.

A PAM2-like motif is present at residues 7 to 17; that stretch reads ALNPHAASYVP. The 44-residue stretch at 66–109 folds into the CUE domain; sequence DIDMDIEYLLVTFSGLSQESITDVYLANGGDLEATIEMLNQLEI. The interval 114-155 is disordered; it reads SEENLPETLDIGDISESGPSTSKSTEVAASTSSVIPNAPVSA. The segment covering 130–148 has biased composition (polar residues); sequence SGPSTSKSTEVAASTSSVI.

As to expression, specifically expressed in immature siliques.

Its function is as follows. Promotes polyploidy in dark-grown seedlings. Regulates the endocycle leading to hypocotyl elongation. The polypeptide is Polyadenylate-binding protein-interacting protein 5 (CID5) (Arabidopsis thaliana (Mouse-ear cress)).